The following is a 947-amino-acid chain: Bifunctional glutamine synthetase adenylyltransferase/adenylyl-removing enzyme (947 aa).

The segment at 1 to 440 (MTPLSSPLSQ…VFNELIGDDE (440 aa)) is adenylyl removase. Residues 450 to 947 (SEPWREVWQD…ASWRKWLVAV (498 aa)) form an adenylyl transferase region.

Belongs to the GlnE family. Requires Mg(2+) as cofactor.

It carries out the reaction [glutamine synthetase]-O(4)-(5'-adenylyl)-L-tyrosine + phosphate = [glutamine synthetase]-L-tyrosine + ADP. The catalysed reaction is [glutamine synthetase]-L-tyrosine + ATP = [glutamine synthetase]-O(4)-(5'-adenylyl)-L-tyrosine + diphosphate. Functionally, involved in the regulation of glutamine synthetase GlnA, a key enzyme in the process to assimilate ammonia. When cellular nitrogen levels are high, the C-terminal adenylyl transferase (AT) inactivates GlnA by covalent transfer of an adenylyl group from ATP to specific tyrosine residue of GlnA, thus reducing its activity. Conversely, when nitrogen levels are low, the N-terminal adenylyl removase (AR) activates GlnA by removing the adenylyl group by phosphorolysis, increasing its activity. The regulatory region of GlnE binds the signal transduction protein PII (GlnB) which indicates the nitrogen status of the cell. This chain is Bifunctional glutamine synthetase adenylyltransferase/adenylyl-removing enzyme, found in Salmonella typhimurium (strain LT2 / SGSC1412 / ATCC 700720).